Here is a 102-residue protein sequence, read N- to C-terminus: Apolipoprotein A-II (102 aa).

The N-terminal stretch at 1-18 (MKLLAMVALLVTICSLEG) is a signal peptide. A Methionine sulfoxide modification is found at M49.

It belongs to the apolipoprotein A2 family. As to quaternary structure, monomer. Interacts with NAXE and NDRG1. In terms of tissue distribution, plasma.

It is found in the secreted. May stabilize HDL (high density lipoprotein) structure by its association with lipids, and affect the HDL metabolism. In Rattus norvegicus (Rat), this protein is Apolipoprotein A-II (Apoa2).